A 120-amino-acid chain; its full sequence is BolA-like protein 2 (120 aa).

This sequence belongs to the BolA/IbaG family. In terms of assembly, interacts with FRA1, GRX3 and GRX4.

The protein resides in the cytoplasm. It localises to the nucleus. Involved in the regulation of the iron regulon in response to decreased mitochondrial iron-sulfur cluster synthesis. May be involved in mitochondrial organization and biogenesis. The sequence is that of BolA-like protein 2 (BOL2) from Saccharomyces cerevisiae (strain ATCC 204508 / S288c) (Baker's yeast).